A 1209-amino-acid polypeptide reads, in one-letter code: Sterol 3-beta-glucosyltransferase (1209 aa).

Positions 167-217 constitute a GRAM 1 domain; it reads ERLIKKFLPNDDEKYIEEYPCWLLRDIMIQGHAYLTNKHLFFFAFIPNFES. The 98-residue stretch at 218–315 folds into the PH domain; the sequence is DFNVTGSLRL…WVSSIKKQMF (98 aa). A GRAM 2 domain is found at 568 to 634; it reads VRFRQHFSFD…EDVENCYKET (67 aa). Serine 745, arginine 746, aspartate 748, asparagine 1019, valine 1048, histidine 1050, histidine 1063, serine 1066, glycine 1067, threonine 1068, aspartate 1087, and glutamine 1088 together coordinate UDP-alpha-D-glucose. The interval 1186–1209 is disordered; that stretch reads AKGNEKEEYSSEGSGSNDGSWLLI. Residues 1196 to 1209 are compositionally biased toward low complexity; the sequence is SEGSGSNDGSWLLI.

The protein belongs to the glycosyltransferase 28 family.

The protein resides in the cytoplasm. It is found in the membrane. It carries out the reaction a sterol + UDP-alpha-D-glucose = a sterol 3-beta-D-glucoside + UDP + H(+). The catalysed reaction is ergosterol + UDP-alpha-D-glucose = ergosteryl 3-beta-D-glucoside + UDP + H(+). In terms of biological role, sterol glycosyltransferase responsible for the glycosylation of ergosterol to form ergosterol-glucoside. In Kluyveromyces lactis (strain ATCC 8585 / CBS 2359 / DSM 70799 / NBRC 1267 / NRRL Y-1140 / WM37) (Yeast), this protein is Sterol 3-beta-glucosyltransferase.